A 130-amino-acid chain; its full sequence is HTH-type transcriptional regulator KmtR (130 aa).

The 95-residue stretch at 10–104 (LPDDQVCLVV…DAVFNAEHAG (95 aa)) folds into the HTH arsR-type domain. The H-T-H motif DNA-binding region spans 44 to 67 (VNELAEQVGKPAPSVSQHLAKLRM). The disordered stretch occupies residues 110-130 (HHRAAGGLQSVAKASATKDVG).

With respect to regulation, binding to DNA is inhibited by nickel and cobalt ions. Functionally, represses expression of Rv2025c and its own expression. Acts by binding to the promoter regions. This chain is HTH-type transcriptional regulator KmtR (kmtR), found in Mycobacterium tuberculosis (strain ATCC 25618 / H37Rv).